The primary structure comprises 345 residues: GMP reductase 1 (345 aa).

Residue 26–27 (SR) participates in NADP(+) binding. Ser28 is modified (phosphoserine). NADP(+)-binding positions include Lys78, 129 to 131 (DVA), and 180 to 181 (VG). The K(+) site is built by Gly181, Gly183, and Cys186. Cys186 acts as the Thioimidate intermediate in catalysis. Catalysis depends on Thr188, which acts as the Proton donor/acceptor. Arg189 contributes to the K(+) binding site. GMP is bound by residues 242 to 243 (GG), 268 to 270 (GMS), and 286 to 290 (RASEG). NADP(+) is bound by residues Met269, 285 to 286 (YR), and 314 to 317 (STCT).

It belongs to the IMPDH/GMPR family. GuaC type 1 subfamily. In terms of assembly, homotetramer.

The catalysed reaction is IMP + NH4(+) + NADP(+) = GMP + NADPH + 2 H(+). Functionally, catalyzes the irreversible NADPH-dependent deamination of GMP to IMP. It functions in the conversion of nucleobase, nucleoside and nucleotide derivatives of G to A nucleotides, and in maintaining the intracellular balance of A and G nucleotides. In Rattus norvegicus (Rat), this protein is GMP reductase 1 (Gmpr).